We begin with the raw amino-acid sequence, 231 residues long: MEKIVGIVVAAGKSKRFGEDKLLINIKGMPIVYYSIRKLHDIKDIEKIILVVRNEMLEYYKEKIKDWKLEKVYKLVLGGEERQDSVYNALKSVDFHCDYVLIHDAARPFVSIKKIEELIKFCTENSLSAILGIPVKDTIKVVDNTTKRIMETLDRSKLWIIQTPQMFPFEIIKEAHKKAREENFVGTDDASLVERLGIPVYVIEGEPFNIKITTKDDLLWMEGILSKSELV.

This sequence belongs to the IspD/TarI cytidylyltransferase family. IspD subfamily.

It catalyses the reaction 2-C-methyl-D-erythritol 4-phosphate + CTP + H(+) = 4-CDP-2-C-methyl-D-erythritol + diphosphate. The protein operates within isoprenoid biosynthesis; isopentenyl diphosphate biosynthesis via DXP pathway; isopentenyl diphosphate from 1-deoxy-D-xylulose 5-phosphate: step 2/6. Functionally, catalyzes the formation of 4-diphosphocytidyl-2-C-methyl-D-erythritol from CTP and 2-C-methyl-D-erythritol 4-phosphate (MEP). This Dictyoglomus thermophilum (strain ATCC 35947 / DSM 3960 / H-6-12) protein is 2-C-methyl-D-erythritol 4-phosphate cytidylyltransferase.